We begin with the raw amino-acid sequence, 93 residues long: Large ribosomal subunit protein uL23cz/uL23cy (93 aa).

This sequence belongs to the universal ribosomal protein uL23 family. In terms of assembly, part of the 50S ribosomal subunit.

Its subcellular location is the plastid. It is found in the chloroplast. Functionally, binds to 23S rRNA. This is Large ribosomal subunit protein uL23cz/uL23cy (rpl23-A) from Gossypium barbadense (Sea Island cotton).